Here is a 216-residue protein sequence, read N- to C-terminus: Large ribosomal subunit protein uL1B (216 aa).

Ser11 carries the phosphoserine modification.

This sequence belongs to the universal ribosomal protein uL1 family. Component of the large ribosomal subunit (LSU). Mature yeast ribosomes consist of a small (40S) and a large (60S) subunit. The 40S small subunit contains 1 molecule of ribosomal RNA (18S rRNA) and at least 33 different proteins. The large 60S subunit contains 3 rRNA molecules (25S, 5.8S and 5S rRNA) and at least 46 different proteins. uL1 forms part of the L1 stalk.

Its subcellular location is the cytoplasm. Its function is as follows. Component of the ribosome, a large ribonucleoprotein complex responsible for the synthesis of proteins in the cell. The small ribosomal subunit (SSU) binds messenger RNAs (mRNAs) and translates the encoded message by selecting cognate aminoacyl-transfer RNA (tRNA) molecules. The large subunit (LSU) contains the ribosomal catalytic site termed the peptidyl transferase center (PTC), which catalyzes the formation of peptide bonds, thereby polymerizing the amino acids delivered by tRNAs into a polypeptide chain. The nascent polypeptides leave the ribosome through a tunnel in the LSU and interact with protein factors that function in enzymatic processing, targeting, and the membrane insertion of nascent chains at the exit of the ribosomal tunnel. uL1 forms part of the L1 stalk, a mobile element that plays a role in evacuating the exit-site tRNA. This is Large ribosomal subunit protein uL1B (rpl101) from Schizosaccharomyces pombe (strain 972 / ATCC 24843) (Fission yeast).